The following is a 170-amino-acid chain: Cyclic pyranopterin monophosphate synthase (170 aa).

Substrate contacts are provided by residues Met75 to His77 and Met115 to Glu116. Asp130 is a catalytic residue.

It belongs to the MoaC family. In terms of assembly, homohexamer; trimer of dimers.

The catalysed reaction is (8S)-3',8-cyclo-7,8-dihydroguanosine 5'-triphosphate = cyclic pyranopterin phosphate + diphosphate. It participates in cofactor biosynthesis; molybdopterin biosynthesis. In terms of biological role, catalyzes the conversion of (8S)-3',8-cyclo-7,8-dihydroguanosine 5'-triphosphate to cyclic pyranopterin monophosphate (cPMP). This chain is Cyclic pyranopterin monophosphate synthase, found in Bacillus velezensis (strain DSM 23117 / BGSC 10A6 / LMG 26770 / FZB42) (Bacillus amyloliquefaciens subsp. plantarum).